Reading from the N-terminus, the 205-residue chain is NADH dehydrogenase (205 aa).

FMN-binding positions include 17–21 (RRSIR), Gln73, 158–159 (LG), and Arg195.

Belongs to the nitroreductase family. As to quaternary structure, homodimer. It depends on FMN as a cofactor.

It carries out the reaction a ubiquinone + NADH + 5 H(+)(in) = a ubiquinol + NAD(+) + 4 H(+)(out). Functionally, can oxidize either NADH or NADPH with a preference for NADH. Can catalyze electron transfer from NADH to various electron acceptors which include, in addition to molecular oxygen, cytochrome c, 2,6 dichlorphenolindophenol, methylene blue, ferricyanide or P-nitroblue tetrazolium. The chain is NADH dehydrogenase (nox) from Thermus thermophilus (strain ATCC 27634 / DSM 579 / HB8).